Consider the following 42-residue polypeptide: Small, acid-soluble spore protein L (42 aa).

Residues 1-42 form a disordered region; sequence MKKKDKGRLTGGVTPQGDLEGNTHNDPKTELEERAKKSNTKR. Over residues 21 to 36 the composition is skewed to basic and acidic residues; it reads GNTHNDPKTELEERAK.

The protein resides in the spore core. The sequence is that of Small, acid-soluble spore protein L (sspL) from Bacillus subtilis (strain 168).